The sequence spans 772 residues: Gelsolin (772 aa).

An N-terminal signal peptide occupies residues 1 to 17 (LGALVVALCALSPPARA). The propeptide occupies 18–33 (ATASRGAPQARAPQGR). Residues 19–38 (TASRGAPQARAPQGRVSPMR) form a disordered region. An actin-severing region spans residues 41 to 166 (TMVVEHPEFL…YKKGGVASGF (126 aa)). Residues 66–148 (FDLVPVPPNL…VQGFESATFL (83 aa)) form a Gelsolin-like 1 repeat. A Phosphotyrosine modification is found at Tyr-76. 6 residues coordinate Ca(2+): Gly-82, Asp-83, Glu-114, Asp-126, Gly-131, and Ala-133. An actin-actin interfilament contact point region spans residues 113–116 (DESG). 152-159 (KSGLKYKK) is an a 1,2-diacyl-sn-glycero-3-phospho-(1D-myo-inositol-4,5-bisphosphate) binding site. Val-162 contributes to the Ca(2+) binding site. 178 to 186 (RLFQVKGRR) provides a ligand contact to a 1,2-diacyl-sn-glycero-3-phospho-(1D-myo-inositol-4,5-bisphosphate). Residues 188–260 (VRATEVPVSW…SEEDAEPAGM (73 aa)) form a Gelsolin-like 2 repeat. The Ca(2+) site is built by Gly-203 and Asp-204. Cys-205 and Cys-218 are oxidised to a cystine. Positions 226, 276, 319, 320, and 344 each coordinate Ca(2+). The stretch at 307–379 (DENPFAQGAL…LPEGGETPLF (73 aa)) is one Gelsolin-like 3 repeat. Phosphotyrosine occurs at positions 399 and 455. Positions 424-772 (AAQHGMDDDG…LDRAIAELAA (349 aa)) are actin-binding, Ca-sensitive. The Gelsolin-like 4 repeat unit spans residues 445-526 (SNKVPVDPAT…VQGKEPAHLM (82 aa)). Residues Gly-461, Asp-462, Glu-492, Asp-504, Gly-509, Pro-511, and Thr-541 each contribute to the Ca(2+) site. One copy of the Gelsolin-like 5 repeat lies at 567-632 (RAVEVIPKAG…AEGSEPDSFW (66 aa)). Lys-574 bears the N6-acetyllysine mark. Ca(2+)-binding residues include Asn-581 and Asp-582. A Phosphotyrosine modification is found at Tyr-593. Glu-604 lines the Ca(2+) pocket. The residue at position 641 (Tyr-641) is a Phosphotyrosine. The Gelsolin-like 6 repeat unit spans residues 671 to 746 (VEEVPGELMQ…VKQGFEPPSF (76 aa)). Residues Asp-686, Asp-687, and Glu-709 each contribute to the Ca(2+) site. Phosphothreonine is present on Thr-732.

It belongs to the villin/gelsolin family. In terms of assembly, binds to actin and to fibronectin. Identified in a complex composed of ACTA1, COBL, GSN and TMSB4X. Interacts with the inactive form of EIF2AK2/PKR. Interacts with FLII. Phosphorylated on tyrosine residues in vitro.

The protein localises to the cytoplasm. It localises to the cytoskeleton. The protein resides in the secreted. Its function is as follows. Calcium-regulated, actin-modulating protein that binds to the plus (or barbed) ends of actin monomers or filaments, preventing monomer exchange (end-blocking or capping). It can promote the assembly of monomers into filaments (nucleation) as well as sever filaments already formed. Plays a role in ciliogenesis. The protein is Gelsolin (GSN) of Sus scrofa (Pig).